Here is an 87-residue protein sequence, read N- to C-terminus: U14-lycotoxin-Ls1a (87 aa).

The N-terminal stretch at 1 to 20 (MNSKVFAVLLLLALSTCVLS) is a signal peptide. Residues 21–66 (EKYCPTPRNTSCKKMNIRNNCCRDSDCTSNAFCCAEPCGNFCHKAS) form the WAP domain. Cystine bridges form between Cys-24–Cys-54, Cys-32–Cys-58, Cys-41–Cys-53, Cys-42–Cys-80, and Cys-47–Cys-62.

This sequence belongs to the venom protein 11 family. 01 (wap-1) subfamily. In terms of processing, contains 5 disulfide bonds. In terms of tissue distribution, expressed by the venom gland.

Its subcellular location is the secreted. Its function is as follows. Has antibacterial activity. This Lycosa singoriensis (Wolf spider) protein is U14-lycotoxin-Ls1a.